We begin with the raw amino-acid sequence, 778 residues long: MSSGAKEGGGGSPAYHLPHPHPHPPQHAQYVGPYRLEKTLGKGQTGLVKLGVHCITGQKVAIKIVNREKLSESVLMKVEREIAILKLIEHPHVLKLHDVYENKKYLYLVLEHVSGGELFDYLVKKGRLTPKEARKFFRQIVSALDFCHSYSICHRDLKPENLLLDEKNNIRIADFGMASLQVGDSLLETSCGSPHYACPEVIKGEKYDGRRADMWSCGVILFALLVGALPFDDDNLRQLLEKVKRGVFHMPHFIPPDCQSLLRGMIEVEPEKRLSLEQIQKHPWYLGGKHEPDPCLEPAPGRRVAMRSLPSNGELDPDVLESMASLGCFRDRERLHRELRSEEENQEKMIYYLLLDRKERYPSCEDQDLPPRNDVDPPRKRVDSPMLSRHGKRRPERKSMEVLSITDAGGGGSPVPTRRALEMAQHSQRSRSVSGASTGLSSSPLSSPRSPVFSFSPEPGAGDEARGGGSPTSKTQTLPSRGPRGGGAGEQPPPPSARSTPLPGPPGSPRSSGGTPLHSPLHTPRASPTGTPGTTPPPSPGGGVGGAAWRSRLNSIRNSFLGSPRFHRRKMQVPTAEEMSSLTPESSPELAKRSWFGNFISLDKEEQIFLVLKDKPLSSIKADIVHAFLSIPSLSHSVLSQTSFRAEYKASGGPSVFQKPVRFQVDISSSEGPEPSPRRDGSGGGGIYSVTFTLISGPSRRFKRVVETIQAQLLSTHDQPSVQALADEKNGAQTRPAGAPPRSLQPPPGRPDPELSSSPRRGPPKDKKLLATNGTPLP.

Residues 1–12 (MSSGAKEGGGGS) are compositionally biased toward gly residues. The disordered stretch occupies residues 1–29 (MSSGAKEGGGGSPAYHLPHPHPHPPQHAQ). The Protein kinase domain occupies 34–285 (YRLEKTLGKG…LEQIQKHPWY (252 aa)). ATP is bound by residues 40 to 48 (LGKGQTGLV) and Lys-63. The active-site Proton acceptor is Asp-156. Thr-189 carries the phosphothreonine; by LKB1 modification. Positions 314–356 (ELDPDVLESMASLGCFRDRERLHRELRSEEENQEKMIYYLLLD) constitute a UBA domain. The span at 362–383 (PSCEDQDLPPRNDVDPPRKRVD) shows a compositional bias: basic and acidic residues. Positions 362-548 (PSCEDQDLPP…SPGGGVGGAA (187 aa)) are disordered. Phosphoserine occurs at positions 399, 443, 447, and 450. Low complexity predominate over residues 430–457 (SRSVSGASTGLSSSPLSSPRSPVFSFSP). Residues Arg-466, Arg-481, Arg-484, and Arg-498 each carry the omega-N-methylarginine modification. Pro residues predominate over residues 491–508 (QPPPPSARSTPLPGPPGS). Phosphoserine is present on Ser-508. Low complexity predominate over residues 509 to 533 (PRSSGGTPLHSPLHTPRASPTGTPG). Arg-525 is modified (omega-N-methylarginine). Thr-529 and Thr-535 each carry phosphothreonine. Residue Arg-550 is modified to Omega-N-methylarginine. A Phosphothreonine modification is found at Thr-583. Phosphoserine occurs at positions 586, 587, and 601. Residues 719-778 (QPSVQALADEKNGAQTRPAGAPPRSLQPPPGRPDPELSSSPRRGPPKDKKLLATNGTPLP) are disordered.

It belongs to the protein kinase superfamily. CAMK Ser/Thr protein kinase family. SNF1 subfamily. Requires Mg(2+) as cofactor. Post-translationally, phosphorylated at Thr-189 by STK11/LKB1 in complex with STE20-related adapter-alpha (STRADA) pseudo kinase and CAB39. Not phosphorylated at Thr-189 by CaMKK2. In contrast, it is phosphorylated and activated by CaMKK1. May be inactivated via dephosphorylation of Thr-189 by PP2C. In terms of tissue distribution, widely expressed, with highest levels in brain and testis. Protein levels remain constant throughout the cell cycle.

The protein resides in the cytoplasm. It is found in the nucleus. Its subcellular location is the cytoskeleton. It localises to the microtubule organizing center. The protein localises to the centrosome. The protein resides in the synapse. It is found in the presynaptic active zone. Its subcellular location is the cytoplasmic vesicle. It localises to the secretory vesicle. The protein localises to the synaptic vesicle. It catalyses the reaction L-seryl-[protein] + ATP = O-phospho-L-seryl-[protein] + ADP + H(+). It carries out the reaction L-threonyl-[protein] + ATP = O-phospho-L-threonyl-[protein] + ADP + H(+). The enzyme catalyses L-seryl-[tau protein] + ATP = O-phospho-L-seryl-[tau protein] + ADP + H(+). The catalysed reaction is L-threonyl-[tau protein] + ATP = O-phospho-L-threonyl-[tau protein] + ADP + H(+). Its activity is regulated as follows. Activated by phosphorylation on Thr-189 by STK11/LKB1. Functionally, serine/threonine-protein kinase that plays a key role in polarization of neurons and centrosome duplication. Phosphorylates CDC25B, CDC25C, MAPT/TAU, RIMS1, TUBG1, TUBG2 and WEE1. Following phosphorylation and activation by STK11/LKB1, acts as a key regulator of polarization of cortical neurons, probably by mediating phosphorylation of microtubule-associated proteins such as MAPT/TAU at 'Thr-529' and 'Ser-579'. Also regulates neuron polarization by mediating phosphorylation of WEE1 at 'Ser-642' in postmitotic neurons, leading to down-regulate WEE1 activity in polarized neurons. In neurons, localizes to synaptic vesicles and plays a role in neurotransmitter release, possibly by phosphorylating RIMS1. Also acts as a positive regulator of centrosome duplication by mediating phosphorylation of gamma-tubulin (TUBG1 and TUBG2) at 'Ser-131', leading to translocation of gamma-tubulin and its associated proteins to the centrosome. Involved in the UV-induced DNA damage checkpoint response, probably by inhibiting CDK1 activity through phosphorylation and activation of WEE1, and inhibition of CDC25B and CDC25C. The protein is Serine/threonine-protein kinase BRSK1 (BRSK1) of Homo sapiens (Human).